The following is a 194-amino-acid chain: Holliday junction branch migration complex subunit RuvA (194 aa).

The domain I stretch occupies residues 1-64 (MIARLSGILV…EDAQLLYGFG (64 aa)). Positions 65–141 (SDQERATFRQ…FAIDGGTALA (77 aa)) are domain II. Residues 141 to 144 (AGSN) form a flexible linker region. The segment at 145–194 (PAKSASSDVLNALLALGYNEREALAAVKQLPADIAVAEGIKLSLKSLSKT) is domain III.

Belongs to the RuvA family. As to quaternary structure, homotetramer. Forms an RuvA(8)-RuvB(12)-Holliday junction (HJ) complex. HJ DNA is sandwiched between 2 RuvA tetramers; dsDNA enters through RuvA and exits via RuvB. An RuvB hexamer assembles on each DNA strand where it exits the tetramer. Each RuvB hexamer is contacted by two RuvA subunits (via domain III) on 2 adjacent RuvB subunits; this complex drives branch migration. In the full resolvosome a probable DNA-RuvA(4)-RuvB(12)-RuvC(2) complex forms which resolves the HJ.

Its subcellular location is the cytoplasm. In terms of biological role, the RuvA-RuvB-RuvC complex processes Holliday junction (HJ) DNA during genetic recombination and DNA repair, while the RuvA-RuvB complex plays an important role in the rescue of blocked DNA replication forks via replication fork reversal (RFR). RuvA specifically binds to HJ cruciform DNA, conferring on it an open structure. The RuvB hexamer acts as an ATP-dependent pump, pulling dsDNA into and through the RuvAB complex. HJ branch migration allows RuvC to scan DNA until it finds its consensus sequence, where it cleaves and resolves the cruciform DNA. The protein is Holliday junction branch migration complex subunit RuvA of Methylobacillus flagellatus (strain ATCC 51484 / DSM 6875 / VKM B-1610 / KT).